Here is an 886-residue protein sequence, read N- to C-terminus: DNA mismatch repair protein MutS (886 aa).

627-634 (GPNMGGKS) serves as a coordination point for ATP. Positions 834-857 (VECADAPAPSDATHPALDRLRDID) are disordered.

Belongs to the DNA mismatch repair MutS family.

Functionally, this protein is involved in the repair of mismatches in DNA. It is possible that it carries out the mismatch recognition step. This protein has a weak ATPase activity. The protein is DNA mismatch repair protein MutS of Burkholderia vietnamiensis (strain G4 / LMG 22486) (Burkholderia cepacia (strain R1808)).